The primary structure comprises 194 residues: IMP cyclohydrolase (194 aa).

It belongs to the archaeal IMP cyclohydrolase family.

It carries out the reaction IMP + H2O = 5-formamido-1-(5-phospho-D-ribosyl)imidazole-4-carboxamide. It participates in purine metabolism; IMP biosynthesis via de novo pathway; IMP from 5-formamido-1-(5-phospho-D-ribosyl)imidazole-4-carboxamide: step 1/1. Catalyzes the cyclization of 5-formylamidoimidazole-4-carboxamide ribonucleotide to IMP. The sequence is that of IMP cyclohydrolase from Halobacterium salinarum (strain ATCC 29341 / DSM 671 / R1).